A 148-amino-acid chain; its full sequence is UPF0179 protein VNG_1401C (148 aa).

Belongs to the UPF0179 family.

In Halobacterium salinarum (strain ATCC 700922 / JCM 11081 / NRC-1) (Halobacterium halobium), this protein is UPF0179 protein VNG_1401C.